The chain runs to 496 residues: Transmembrane protein 104 (496 aa).

The Cytoplasmic segment spans residues 1–10 (MAGEITETGE). The helical transmembrane segment at 11 to 31 (LYSSYVGLVYMFNLIVGTGAL) threads the bilayer. Over 32–36 (TMPKA) the chain is Extracellular. The helical transmembrane segment at 37-57 (FATAGWLVSLVLLVFLGFMSF) threads the bilayer. The Cytoplasmic portion of the chain corresponds to 58 to 146 (VTTTFVIEAM…SMFFNKVGVN (89 aa)). The helical transmembrane segment at 147-167 (LFYFCIIVYLYGDLAIYAAAV) threads the bilayer. The Extracellular segment spans residues 168–204 (PFSLMQVTCSATGNDSCGVEADTKYNDTDRCWGPLRR). N-linked (GlcNAc...) asparagine glycosylation is present at Asn-193. The helical transmembrane segment at 205–225 (VDAYRIYLAIFTLLLGPFTFF) threads the bilayer. At 226 to 233 (DVQKTKYL) the chain is on the cytoplasmic side. Residues 234-254 (QILTSLMRWIAFAVMIVLALI) traverse the membrane as a helical segment. The Extracellular portion of the chain corresponds to 255 to 276 (RIGHGQGEGHPPLADFSGVRNL). Residues 277-297 (FGVCVYSFMCQHSLPSLITPV) form a helical membrane-spanning segment. The Cytoplasmic segment spans residues 298 to 306 (SSKRHLTRL). The chain crosses the membrane as a helical span at residues 307–327 (VFLDYVLILAFYGLLSFTAIF). The Extracellular segment spans residues 328 to 354 (CFRGDSLMDMYTLNFARCDVVGLAAVR). The chain crosses the membrane as a helical span at residues 355-375 (FFLGLFPVFTISTNFPIIAVT). At 376–397 (LRNNWKTLFHREGGTYPWVVDR) the chain is on the cytoplasmic side. A helical transmembrane segment spans residues 398–418 (VVFPTITLVPPVLVAFCTHDL). At 419 to 421 (ESL) the chain is on the extracellular side. A helical transmembrane segment spans residues 422–442 (VGITGAYAGTGIQYVIPAFLV). At 443-470 (YHCRRDTQLAFGCGVSNKHRSPFRHTFW) the chain is on the cytoplasmic side. A helical transmembrane segment spans residues 471 to 491 (VGFVLLWAFSCFIFVTANIIL). The Extracellular portion of the chain corresponds to 492–496 (SETKL).

The protein belongs to the TMEM104 family.

It localises to the membrane. In Homo sapiens (Human), this protein is Transmembrane protein 104 (TMEM104).